We begin with the raw amino-acid sequence, 185 residues long: Translocon-associated protein subunit gamma (185 aa).

M1 bears the N-acetylmethionine mark. The Lumenal segment spans residues 1 to 27; it reads MAPKGGPKQQSEEDLLLQDFSRNLSAK. Phosphoserine is present on S11. The helical transmembrane segment at 28-48 threads the bilayer; that stretch reads SSALFFGNAFIVSAIPIWLYW. Residues 49-54 lie on the Cytoplasmic side of the membrane; it reads RIWHMD. The chain crosses the membrane as a helical span at residues 55 to 76; that stretch reads LIQSAVLYSVMTLVSTYLVAFA. Residues 77–135 lie on the Lumenal side of the membrane; it reads YKNVKFVLKHKVAQKREDAVSKEVTRKLSEADNRKMSRKEKDERILWKKNEVADYEATT. At S105 the chain carries Phosphoserine. The chain crosses the membrane as a helical span at residues 136-157; that stretch reads FSIFYNNTLFLVLVIVASFFIL. Topologically, residues 158–163 are cytoplasmic; sequence KNFNPT. The helical transmembrane segment at 164 to 184 threads the bilayer; sequence VNYILSISASSGLIALLSTGS.

This sequence belongs to the TRAP-gamma family. As to quaternary structure, heterotetramer of TRAP-alpha, TRAP-beta, TRAP-delta and TRAP-gamma.

The protein localises to the endoplasmic reticulum membrane. Functionally, TRAP proteins are part of a complex whose function is to bind calcium to the ER membrane and thereby regulate the retention of ER resident proteins. The sequence is that of Translocon-associated protein subunit gamma (SSR3) from Bos taurus (Bovine).